Here is a 421-residue protein sequence, read N- to C-terminus: ATP-dependent RNA helicase RhlB (421 aa).

Positions 9–37 (QKFSDFALHPQVVEALEKKGFYNCTPIQA) match the Q motif motif. The Helicase ATP-binding domain occupies 40–219 (LPLTLAGRDV…FEQMNNAEYV (180 aa)). Position 53–60 (53–60 (AQTGTGKT)) interacts with ATP. The short motif at 165-168 (DEAD) is the DEAD box element. In terms of domain architecture, Helicase C-terminal spans 245–390 (RLLQTLIEEE…VSKYNPEALM (146 aa)). A disordered region spans residues 396 to 421 (PLRLTRSRPGNGPRRAGAPRNRRRSG). Low complexity predominate over residues 402–414 (SRPGNGPRRAGAP).

This sequence belongs to the DEAD box helicase family. RhlB subfamily. Component of the RNA degradosome, which is a multiprotein complex involved in RNA processing and mRNA degradation.

It is found in the cytoplasm. It carries out the reaction ATP + H2O = ADP + phosphate + H(+). Functionally, DEAD-box RNA helicase involved in RNA degradation. Has RNA-dependent ATPase activity and unwinds double-stranded RNA. This is ATP-dependent RNA helicase RhlB from Salmonella arizonae (strain ATCC BAA-731 / CDC346-86 / RSK2980).